A 563-amino-acid chain; its full sequence is MSDFVDRVTVHVKGGDGGNGSAGIRREKYKPLAGPNGGNGGDGGSVVFVADRNATSLLDYRFMPHRVAGSGTMGLGDNKDGSKGEDLILPVPCGTVVFEARGEQGKAKHPGAQLADLRHEGDRCVVAQGGAGGLGNIALANKTRRAPGFALLGELGEERDVILELKSIADVALVGFPSAGKSSLIAAMSSAKPKIADYPFTTLVPNLGVVIAGDSRYTIADVPGLIPGASEGKGLGLEFLRHIERTEIIAHVIDCATLEPDRDPMSDYHALENELALYADKLELPLGAIPIPERPRIVILNKIDVPEAKELAEFVRPEFERLGLKVFEISTASHEGLKELNFALSALVHEMREEVANREQAEEEARVVIKPLETKGRRPRRADEGGSALEFTVERRELGNGEVFFEVRGVKPERWVMQTNFDNDEAVGYLADRLAKLGVEDELRRKGAHPGDEVRIGRGARMVEFDWDPTISAGAEMLDGSNLGARGKDLRLEEQDPRTHRRSNAERRAQYHEMMDARAAVRDAMMAERKAGHWADPTVDDDRHDENSLFGHGESSEDGETEE.

The Obg domain maps to 2–168 (SDFVDRVTVH…RDVILELKSI (167 aa)). One can recognise an OBG-type G domain in the interval 169 to 349 (ADVALVGFPS…LNFALSALVH (181 aa)). Residues 175–182 (GFPSAGKS), 200–204 (FTTLV), 221–224 (DVPG), 301–304 (NKID), and 330–332 (STA) contribute to the GTP site. The Mg(2+) site is built by serine 182 and threonine 202. Residues 383–469 (DEGGSALEFT…ARMVEFDWDP (87 aa)) enclose the OCT domain. Disordered stretches follow at residues 478 to 509 (LDGS…ERRA) and 528 to 563 (ERKA…ETEE). Residues 486 to 509 (RGKDLRLEEQDPRTHRRSNAERRA) are compositionally biased toward basic and acidic residues.

Belongs to the TRAFAC class OBG-HflX-like GTPase superfamily. OBG GTPase family. As to quaternary structure, monomer. Mg(2+) is required as a cofactor.

Its subcellular location is the cytoplasm. Functionally, an essential GTPase which binds GTP, GDP and possibly (p)ppGpp with moderate affinity, with high nucleotide exchange rates and a fairly low GTP hydrolysis rate. Plays a role in control of the cell cycle, stress response, ribosome biogenesis and in those bacteria that undergo differentiation, in morphogenesis control. The sequence is that of GTPase Obg from Bifidobacterium longum subsp. infantis (strain ATCC 15697 / DSM 20088 / JCM 1222 / NCTC 11817 / S12).